A 1200-amino-acid chain; its full sequence is MVYVKRIELSHFKSFGGTTAIPFLPGFTVVSGPNGSGKSNILDALLFCLGLATSKGMRAERLPDLVNNTFKGNRGSSEASVSVTFELHDGENLSEPGANHNGNGNGAKISKEWTVTRRLKVTKGGNYSSNYYINGETATVTELHEQLNELRIYPEGYNIVLQGDVTRIITMNSKERREIIDELAGVAEFDRKIVKTKETLTEVQDREERCQIIATELERTLERLAADRQKAEKYQALRQQVQEKQGWAKVIQYKAVEQQRQKLWGQLERDREQSQQIQQALDQRSQAIQTQQTELEKLNAQVKALGEEEQLAVAAQLATQKAQRDQLQQRYNDGDRQITNHQQQVGQIQAEISQSQQQFLHIQQEKSFHNTQTLPQLEAAVQTSQQQLEQLRHQAQAIASASEAWVQEQTQLSRTVNQLQDELIPQRSQLAQLEERQQQLLTNLAELTPLLTKVSVELEEKQFAQGQFNFQGEALTSQIQTLASDLAQLEQERSLLQETQTRLLKEQQEKQRQLDKLEAASQAQQEVQGTYATKVILQSDLPGVCGLVAQLGQVEPQYQLALEIAAGGRLGFLVVEDDGVAAAGIEILKQAKAGRATFLPLNKIRPPKGQNPNLSYAHGYIDLAVNLIDGDRRYADIFAFIFGNTIVFDTLVNARNHLGKHRIVTLEGDLLEASGAMSGGSRNQRSGLRFGTMVSEDTAEVKQLRQRLQDIQQVQGRNEELLLERTVRSRQLTQQLMEMRQQQREAQLHGEQTERDIARLSQQQTQINQQQINQQQKLAELQQNLALLQQSLPPLEQQLASAQQQLTALETSQTHQQWQTIQIQIRTVEAEYQRQLQALRQGEDHLKDLQNSSQRLEEKIAQAQEKIAQHQAQDLTLAQEQEQLKIALAEMNGAIQTTEAQLAKLSEKLGSTKQERDRLETQLNQLRSQQQEQQWQWEKLQTNQQEYQENLTQLQTQLEALEQDLPDPWPEIPLLQDRDEANLDFANILEELERSIRNGQKRLEAMEPVNMLALQEYEKTEARLGELSEKLQTIAGERTELLLRIENFTTLRRRSFQDAFDAVNKNFQIIFAELSDGDGYLQLDDAEDPFNGGLNLVAHPKGKPVRRLSSMSGGEKSLTALSFIFALQRYRPSPFYGFDEVDMFLDGANVEKLSKMVRKQAQQAQFIVVSLRRPMIEAAERTIGVTQARGAHTQVLGIKL.

An ATP-binding site is contributed by 33–40; that stretch reads PNGSGKSN. A disordered region spans residues 90-109; the sequence is GENLSEPGANHNGNGNGAKI. Positions 202–528 form a coiled coil; that stretch reads EVQDREERCQ…AASQAQQEVQ (327 aa). One can recognise an SMC hinge domain in the interval 542 to 656; the sequence is PGVCGLVAQL…VFDTLVNARN (115 aa). A coiled-coil region spans residues 692-1046; sequence TMVSEDTAEV…ERTELLLRIE (355 aa).

The protein belongs to the SMC family. As to quaternary structure, homodimer.

It localises to the cytoplasm. Its function is as follows. Required for chromosome condensation and partitioning. This is Chromosome partition protein Smc from Synechocystis sp. (strain ATCC 27184 / PCC 6803 / Kazusa).